Reading from the N-terminus, the 336-residue chain is MRAAVVTKDHKVSIEDKKLRALKPGEALVQTEYCGVCHTDLHVKNADFGDVTGVTLGHEGIGKVIEVAEDVESLKIGDRVSIAWMFESCGRCEYCTTGRETLCRSVKNAGYTVDGAMAEQVIVTADYAVKVPEKLDPAAASSITCAGVTTYKAVKVSNVKPGQWLGVFGIGGLGNLALQYAKNVMGAKIVAFDINDDKLAFAKELGADAIINSKDVDPVAEVMKLTDNKGLDATVVTSVAKTPFNQAVDVVKAGARVVAVGLPVDKMNLDIPRLVLDGIEVVGSLVGTRQDLREAFEFAAENKVTPKVQLRKLEEINDIFEEMEKGTITGRMVIKF.

The Zn(2+) site is built by C37, H58, C89, C92, C95, C103, and C145.

This sequence belongs to the zinc-containing alcohol dehydrogenase family. Zn(2+) serves as cofactor.

It catalyses the reaction a primary alcohol + NAD(+) = an aldehyde + NADH + H(+). The enzyme catalyses a secondary alcohol + NAD(+) = a ketone + NADH + H(+). This chain is Alcohol dehydrogenase (adh), found in Staphylococcus aureus (strain Mu50 / ATCC 700699).